The sequence spans 222 residues: N-(5'-phosphoribosyl)anthranilate isomerase (222 aa).

Belongs to the TrpF family.

The catalysed reaction is N-(5-phospho-beta-D-ribosyl)anthranilate = 1-(2-carboxyphenylamino)-1-deoxy-D-ribulose 5-phosphate. Its pathway is amino-acid biosynthesis; L-tryptophan biosynthesis; L-tryptophan from chorismate: step 3/5. The sequence is that of N-(5'-phosphoribosyl)anthranilate isomerase from Xanthomonas oryzae pv. oryzae (strain PXO99A).